Here is a 243-residue protein sequence, read N- to C-terminus: Nuclear ubiquitous casein and cyclin-dependent kinase substrate 1 (243 aa).

The segment at 1-243 (MSRPVRNRKV…SEDDAQSGED (243 aa)) is disordered. A Phosphotyrosine modification is found at Tyr13. Phosphoserine is present on residues Ser14 and Ser19. Tyr26 is subject to Phosphotyrosine. Residues 35 to 51 (KKIRSSPREAKNKRRSG) show a composition bias toward basic residues. Residues Ser54, Ser58, Ser61, Ser73, Ser75, and Ser79 each carry the phosphoserine modification. A compositionally biased stretch (basic and acidic residues) spans 64 to 77 (KDVKTKKDDSHSAE). A compositionally biased stretch (low complexity) spans 91–100 (QQRQAASKAA). The span at 111 to 124 (VGSEEEQEEEDEAP) shows a compositional bias: acidic residues. Ser113, Ser130, Ser132, and Ser144 each carry phosphoserine. Over residues 132–145 (SDEDFLVEDDDDSD) the composition is skewed to acidic residues. Over residues 149 to 174 (SKKKNKKMVKKSKPERKEKKMPKPRL) the composition is skewed to basic residues. The residue at position 179 (Thr179) is a Phosphothreonine. Ser181 carries the post-translational modification Phosphoserine. Over residues 197 to 206 (ASKEKTPSPK) the composition is skewed to basic and acidic residues. Phosphothreonine is present on Thr202. A phosphoserine mark is found at Ser204, Ser214, Ser223, Ser229, Ser234, and Ser240. The segment covering 232-243 (EGSEDDAQSGED) has biased composition (acidic residues).

In terms of assembly, does not interact with RAD51. Post-translationally, phosphorylated in an ATM-dependent manner in response to DNA damage. Phosphorylated by CDK1 and casein kinase.

It is found in the nucleus. The protein resides in the chromosome. Chromatin-associated protein involved in DNA repair by promoting homologous recombination (HR). Binds double-stranded DNA (dsDNA) and secondary DNA structures, such as D-loop structures, but with less affinity than RAD51AP1. This is Nuclear ubiquitous casein and cyclin-dependent kinase substrate 1 (NUCKS1) from Bos taurus (Bovine).